Here is a 120-residue protein sequence, read N- to C-terminus: NAD(P)H-quinone oxidoreductase subunit 3, chloroplastic (120 aa).

The next 3 helical transmembrane spans lie at 9-29 (IFWAFLIISSAIPVLAFLISG), 64-84 (MFALVFVVFDVETVFLYPWAM), and 88-108 (VLGVSAFLEAFIFVLILILGL).

The protein belongs to the complex I subunit 3 family. NDH is composed of at least 16 different subunits, 5 of which are encoded in the nucleus.

It localises to the plastid. Its subcellular location is the chloroplast thylakoid membrane. The enzyme catalyses a plastoquinone + NADH + (n+1) H(+)(in) = a plastoquinol + NAD(+) + n H(+)(out). It carries out the reaction a plastoquinone + NADPH + (n+1) H(+)(in) = a plastoquinol + NADP(+) + n H(+)(out). Its function is as follows. NDH shuttles electrons from NAD(P)H:plastoquinone, via FMN and iron-sulfur (Fe-S) centers, to quinones in the photosynthetic chain and possibly in a chloroplast respiratory chain. The immediate electron acceptor for the enzyme in this species is believed to be plastoquinone. Couples the redox reaction to proton translocation, and thus conserves the redox energy in a proton gradient. In Draba nemorosa (Woodland whitlowgrass), this protein is NAD(P)H-quinone oxidoreductase subunit 3, chloroplastic.